We begin with the raw amino-acid sequence, 447 residues long: Putative branched-chain amino acid carrier protein SE_1090 (447 aa).

The next 12 membrane-spanning stretches (helical) occupy residues 5 to 25 (TWII…LIFP), 40 to 60 (ILAF…VGAL), 74 to 94 (PRFS…LFAI), 114 to 134 (GNLA…YLCL), 143 to 163 (IGSL…IKGF), 193 to 213 (GYLT…VNAI), 229 to 249 (IIAG…LGYI), 290 to 310 (LLGI…IVSV), 317 to 337 (ILPK…SFIL), 350 to 370 (VPVL…ILIA), 382 to 402 (IPLI…QGWI), and 417 to 437 (LEWF…SYFV).

This sequence belongs to the branched chain amino acid transporter family.

The protein localises to the cell membrane. Its function is as follows. Component of the transport system for branched-chain amino acids (leucine, isoleucine and valine), which is coupled to a proton motive force. The sequence is that of Putative branched-chain amino acid carrier protein SE_1090 from Staphylococcus epidermidis (strain ATCC 12228 / FDA PCI 1200).